The sequence spans 465 residues: FAD-dependent monooxygenase olcE (465 aa).

A helical membrane pass occupies residues 9 to 29 (IIIGGSVAGLTLALSLNKIGI). Residues Glu35, Gly49, Arg108, Asp308, and Ala321 each coordinate FAD.

This sequence belongs to the paxM FAD-dependent monooxygenase family. Requires FAD as cofactor.

It is found in the membrane. The protein operates within secondary metabolite biosynthesis; terpenoid biosynthesis. Its function is as follows. FAD-dependent monooxygenase; part of the gene cluster that mediates the biosynthesis of 15-deoxyoxalicine B. The first step of the pathway is the synthesis of nicotinyl-CoA from nicotinic acid by the nicotinic acid-CoA ligase olcI. Nicotinyl-CoA is then a substrate of polyketide synthase olcA to produce 4-hydroxy-6-(3-pyridinyl)-2H-pyran-2-one (HPPO) which is further prenylated by the polyprenyl transferase olcH to yield geranylgeranyl-HPPO. Geranylgeranyl pyrophosphate is provided by the cluster-specific geranylgeranyl pyrophosphate synthase olcC. The FAD-dependent monooxygenase olcE catalyzes the epoxidation of geranylgeranyl-HPPO and the terpene cyclase olcD catalyzes the cyclization of the terpenoid component, resulting in the formation of the tricyclic terpene moiety seen in predecaturin E. The cytochrome P450 monooxygenase then catalyzes the allylic oxidation of predecaturin E, which is followed by spirocylization with concomitant loss of one molecule of water to form decaturin E. Decaturin E is the substrate of the cytochrome P450 monooxygenase olcJ which hydroxylates it at the C-29 position to form decaturin F. The short-chain dehydrogenase/reductase olcF may catalyze the oxidation of decaturin F to generate the 29-hydroxyl-27-one intermediate, and subsequent hemiacetal formation probably leads to the formation of decaturin C. The dioxygenase olcK may be a peroxisomal enzyme that catalyzes the hydroxylation of decaturin C into decaturin A once decaturin C is shuttled into the peroxisome by the MFS transporter olcL. Finally the cytochrome P450 monooxygenase olcB catalyzes the oxidative rearrangement to yield 15-deoxyoxalicine B. In the absence of olcJ, decaturin E may be shunted to a pathway in which it is oxidized to a ketone, possibly by olcF, to form decaturin D, which undergoes further allylic oxidation to yield decaturin G. Moreover, in the absence of oclK or oclL, oclB can convert decaturin C into 15-deoxyoxalicine A. This Penicillium canescens protein is FAD-dependent monooxygenase olcE.